Consider the following 137-residue polypeptide: MGDWKGYISAVLRDQRIDDVAIVGHSDNRCVWASRPGGLLAAISPQEVGVLTGPDRSTFLQAGLCVAGRRCCVIRDHLLAEGDGVLDARTKGLDGRAICVGHTPRALLVLMGRRGVHGGILNKTMHELIHGLRSQGT.

This sequence belongs to the profilin family. In terms of assembly, interacts with ACTRT3.

It localises to the cytoplasm. It is found in the cytoskeleton. The protein resides in the nucleus. In terms of biological role, binds to actin and affects the structure of the cytoskeleton. Binds to poly-L-proline, phosphatidylinositol 3-phosphate (PtdIns(3)P), phosphatidylinositol 4,5-bisphosphate (PtdIns(4,5)P2) and phosphatidylinositol 4-phosphate (PtdIns(4)P). Slightly reduces actin polymerization. May be involved in spermatogenesis. The polypeptide is Profilin-3 (PFN3) (Bos taurus (Bovine)).